Reading from the N-terminus, the 458-residue chain is Aldehyde dehydrogenase (458 aa).

NADP(+) is bound by residues 134-135 (WN), 158-161 (KHAS), and 210-211 (GS). The active-site Proton acceptor is the E232. L233 is a binding site for NADP(+). Catalysis depends on C266, which acts as the Nucleophile. NADP(+) is bound at residue E363.

It belongs to the aldehyde dehydrogenase family. Monomer.

It carries out the reaction an aldehyde + NAD(+) + H2O = a carboxylate + NADH + 2 H(+). It catalyses the reaction an aldehyde + NADP(+) + H2O = a carboxylate + NADPH + 2 H(+). The protein operates within carbohydrate metabolism; D-xylose degradation. Aldehyde dehydrogenase able to oxidize various aldehydes such as formaldehyde, glyceraldehyde, butyraldehyde, glutaraldehyde and benzaldehyde (in vitro). Is likely involved in the oxidative D-xylose degradation pathway, catalyzing the oxidation step of 2-oxoglutarate semialdehyde to 2-oxoglutarate. Is able to use both NAD(+) and NADP(+); however, shows a preference for NADP(+). Does not display succinate semialdehyde dehydrogenase activity. In Paenarthrobacter nicotinovorans (Arthrobacter nicotinovorans), this protein is Aldehyde dehydrogenase (aldh).